Here is a 96-residue protein sequence, read N- to C-terminus: Co-chaperonin GroES 1 (96 aa).

The protein belongs to the GroES chaperonin family. In terms of assembly, heptamer of 7 subunits arranged in a ring. Interacts with the chaperonin GroEL.

It localises to the cytoplasm. Its function is as follows. Together with the chaperonin GroEL, plays an essential role in assisting protein folding. The GroEL-GroES system forms a nano-cage that allows encapsulation of the non-native substrate proteins and provides a physical environment optimized to promote and accelerate protein folding. GroES binds to the apical surface of the GroEL ring, thereby capping the opening of the GroEL channel. The protein is Co-chaperonin GroES 1 of Vibrio cholerae serotype O1 (strain ATCC 39315 / El Tor Inaba N16961).